Here is an 800-residue protein sequence, read N- to C-terminus: MSLVYLMATNLLFMLIVLFTLSHRQLRKVAGYVALIAPIVTSTYFIMKIPDVIRNKFIAVRLPWMPSIDINLDLRLDGLSLMFGLIISLIGVGVFFYATQYLSHSTDNLPRFFIYLLLFMFSMIGIVIANNTILMYVFWELTSISSFLLISYWYNNGESQLGAIQSFMITVFGGLALLTGFIILYIITGTNTITDILNQRNAISRHPLFIPMILMLLLGAFTKSAQFPFHIWLPKAMAAPTPVSAYLHSATMVKAGIFLLFRFTPLLGLSNVYIYTVTFVGLITMLFGSLTALRQYDLKGILAYSTISQLGMIMTMVGLGGGYAQHTSDELSKFYILVLFAGLFHLMNHAVFKCALFMGVGIIDHESGTRDIRLLNGMRKVFPKMHIVMLLAALSMAGVPFLNGFLSKEMFLDSLTKANELDQYGFVLTFVIISIGVIASILTFTYALYMIKETFWGNYNIEKFKRKQIHEPWLFSLPAVILMLLIPVIFFVPNVFGNFVILPATRSVSGIGAEVDAFVPHISQWHGVNLPLILSIVVIIIGLILALVVNWKEVTHQIIKSASITDGYRKIYREFELYSARGIRALMNNKLNYYIMITLFIFVAIVVYGYLTVGFPHVHQLHISSFGPLEVILSVVTLIIGISLIFIRQRLTMVVLNGMIGFAVTLYFIAMKAPDLALTQLVVETITTILFIVSFSRLPNIPRVKANLKKETFKIIVSLVMALTVVSLIFVAQQADGMPSIAKFYEDAYELTGGKNIVNAILGDFRALDTMFEGLVLIIAGLGIYTLLNYKDRRGQDERE.

21 helical membrane-spanning segments follow: residues 1–21, 29–49, 78–98, 109–129, 133–153, 167–187, 209–229, 241–261, 272–292, 300–320, 336–356, 387–407, 424–444, 472–492, 528–548, 595–615, 627–647, 651–671, 676–696, 712–732, and 768–788; these read MSLVYLMATNLLFMLIVLFTL, VAGYVALIAPIVTSTYFIMKI, GLSLMFGLIISLIGVGVFFYA, LPRFFIYLLLFMFSMIGIVIA, ILMYVFWELTSISSFLLISYW, FMITVFGGLALLTGFIILYII, FIPMILMLLLGAFTKSAQFPF, TPVSAYLHSATMVKAGIFLLF, VYIYTVTFVGLITMLFGSLTA, GILAYSTISQLGMIMTMVGLG, ILVLFAGLFHLMNHAVFKCAL, IVMLLAALSMAGVPFLNGFLS, YGFVLTFVIISIGVIASILTF, PWLFSLPAVILMLLIPVIFFV, VNLPLILSIVVIIIGLILALV, IMITLFIFVAIVVYGYLTVGF, GPLEVILSVVTLIIGISLIFI, LTMVVLNGMIGFAVTLYFIAM, LALTQLVVETITTILFIVSFS, TFKIIVSLVMALTVVSLIFVA, and LDTMFEGLVLIIAGLGIYTLL.

It belongs to the CPA3 antiporters (TC 2.A.63) subunit A family. As to quaternary structure, may form a heterooligomeric complex that consists of seven subunits: mnhA2, mnhB2, mnhC2, mnhD2, mnhE2, mnhF2 and mnhG2.

The protein localises to the cell membrane. This chain is Putative antiporter subunit mnhA2 (mnhA2), found in Staphylococcus epidermidis (strain ATCC 12228 / FDA PCI 1200).